The sequence spans 263 residues: MKNNYTSLKSPIDEEDELKTDHEIDLEKGPLPEYDSEEESTLPPYSDHARLKNPPYTHREKNPSRSTDNSSPFLIKLLISFTSIILFNAPAVCYLKYKDAFFKNYGAAEWTLFGFWCLVCTLALISLTYFYETWTKAVKVTVISLAQCVKACGKGIKHFLKNWRNMIFAFCKSSLFCLVLLKAENELSSHLGDQQWGWKCSASAFTFMAVSSILIFIAETVEPGSCSTDLVKRVQAYCGYEARQYASSNTAIPLHEMNPENEA.

The interval 1–68 is disordered; sequence MKNNYTSLKS…REKNPSRSTD (68 aa). Basic and acidic residues predominate over residues 19-30; that stretch reads KTDHEIDLEKGP. 3 consecutive transmembrane segments (helical) span residues 73–93, 110–130, and 201–221; these read FLIKLLISFTSIILFNAPAVC, WTLFGFWCLVCTLALISLTYF, and SASAFTFMAVSSILIFIAETV.

This sequence belongs to the WTF family. Homomer. Interacts with other proteins that exhibit high sequence similarity.

Its subcellular location is the spore membrane. The protein localises to the vacuole membrane. Functionally, acts as a suppressor component of the dual wtf meiotic drive system, and can suppress but not confer meiotic drive by compatible poisons. Wtf meiotic drive systems promote unequal transmission of alleles from the parental zygote to progeny spores by encoding a poison and an antidote from the same locus; the poison is trans-acting and forms toxic aggregates in all spores within an ascus, wherease the antidote is spore-specific and targets aggregates for degradation by the vacuole. Meiotic drive by wtf systems therefore lead to poisoning of all progeny that do not inherit the dual poison/antidote allele, or express a compatible antidote. The chain is Meiotic drive suppressor wtf6 from Schizosaccharomyces kambucha (Fission yeast).